Reading from the N-terminus, the 45-residue chain is Cytochrome b559 subunit beta (45 aa).

Residues 20–36 (WLALHTLGIPTVFFLGA) traverse the membrane as a helical segment. A heme-binding site is contributed by H24.

This sequence belongs to the PsbE/PsbF family. In terms of assembly, heterodimer of an alpha subunit and a beta subunit. PSII is composed of 1 copy each of membrane proteins PsbA, PsbB, PsbC, PsbD, PsbE, PsbF, PsbH, PsbI, PsbJ, PsbK, PsbL, PsbM, PsbT, PsbX, PsbY, PsbZ, Psb30/Ycf12, peripheral proteins PsbO, CyanoQ (PsbQ), PsbU, PsbV and a large number of cofactors. It forms dimeric complexes. Heme b is required as a cofactor.

It is found in the cellular thylakoid membrane. Its function is as follows. This b-type cytochrome is tightly associated with the reaction center of photosystem II (PSII). PSII is a light-driven water:plastoquinone oxidoreductase that uses light energy to abstract electrons from H(2)O, generating O(2) and a proton gradient subsequently used for ATP formation. It consists of a core antenna complex that captures photons, and an electron transfer chain that converts photonic excitation into a charge separation. The protein is Cytochrome b559 subunit beta of Synechococcus sp. (strain CC9902).